A 571-amino-acid polypeptide reads, in one-letter code: Proline--tRNA ligase (571 aa).

Belongs to the class-II aminoacyl-tRNA synthetase family. ProS type 1 subfamily. Homodimer.

Its subcellular location is the cytoplasm. It catalyses the reaction tRNA(Pro) + L-proline + ATP = L-prolyl-tRNA(Pro) + AMP + diphosphate. Its function is as follows. Catalyzes the attachment of proline to tRNA(Pro) in a two-step reaction: proline is first activated by ATP to form Pro-AMP and then transferred to the acceptor end of tRNA(Pro). As ProRS can inadvertently accommodate and process non-cognate amino acids such as alanine and cysteine, to avoid such errors it has two additional distinct editing activities against alanine. One activity is designated as 'pretransfer' editing and involves the tRNA(Pro)-independent hydrolysis of activated Ala-AMP. The other activity is designated 'posttransfer' editing and involves deacylation of mischarged Ala-tRNA(Pro). The misacylated Cys-tRNA(Pro) is not edited by ProRS. The protein is Proline--tRNA ligase of Ectopseudomonas mendocina (strain ymp) (Pseudomonas mendocina).